The chain runs to 314 residues: Taste receptor type 2 member 42 (314 aa).

Residues 1 to 7 (MATELDK) lie on the Extracellular side of the membrane. A helical membrane pass occupies residues 8-28 (IFLILAIAEFIISMLGNVFIG). Over 29–50 (LVNCSEGIKNQKVFSADFILTC) the chain is Cytoplasmic. The helical transmembrane segment at 51–71 (LAISTIGQLLVILFDSFLVGL) threads the bilayer. Topologically, residues 72–101 (ASHLYTTYRLGKTVIMLWHMTNHLTTWLAT) are extracellular. The chain crosses the membrane as a helical span at residues 102-122 (CLSIFYFFKIAHFPHSLFLWL). The Cytoplasmic portion of the chain corresponds to 123 to 127 (RWRMN). A helical membrane pass occupies residues 128–148 (GMIVMLLILSLFLLIFDSLVL). Over 149-187 (EIFIDISLNIIDKSNLTLYLDESKTLYDKLSILKTLLSL) the chain is Extracellular. Asn-163 carries N-linked (GlcNAc...) asparagine glycosylation. The chain crosses the membrane as a helical span at residues 188-208 (TSFIPFSLFLTSLLFLFLSLV). Residues 209 to 238 (RHTRNLKLSSLGSRDSSTEAHRRAMKMVMS) are Cytoplasmic-facing. A helical transmembrane segment spans residues 239–259 (FLFLFIVHFFSLQVANWIFFM). Topologically, residues 260–265 (LWNNKC) are extracellular. Residues 266-286 (IKFVMLALNAFPSCHSFILIL) form a helical membrane-spanning segment. Residues 287–314 (GNSKLQQTAVRLLWHLRNYTKTPNPLPL) are Cytoplasmic-facing.

It belongs to the G-protein coupled receptor T2R family.

It localises to the membrane. Functionally, receptor that may play a role in the perception of bitterness and is gustducin-linked. May play a role in sensing the chemical composition of the gastrointestinal content. The activity of this receptor may stimulate alpha gustducin, mediate PLC-beta-2 activation and lead to the gating of TRPM5. This chain is Taste receptor type 2 member 42 (TAS2R42), found in Homo sapiens (Human).